The sequence spans 343 residues: Dihydroorotase (343 aa).

2 residues coordinate Zn(2+): His13 and His15. Residues 15–17 (HFR) and Asn41 each bind substrate. Lys98, His135, and His173 together coordinate Zn(2+). Position 98 is an N6-carboxylysine (Lys98). Substrate is bound at residue His135. A substrate-binding site is contributed by Leu218. Zn(2+) is bound at residue Asp246. Asp246 is an active-site residue. Substrate is bound by residues His250 and Ala262.

This sequence belongs to the metallo-dependent hydrolases superfamily. DHOase family. Class II DHOase subfamily. Homodimer. Zn(2+) serves as cofactor.

The enzyme catalyses (S)-dihydroorotate + H2O = N-carbamoyl-L-aspartate + H(+). It functions in the pathway pyrimidine metabolism; UMP biosynthesis via de novo pathway; (S)-dihydroorotate from bicarbonate: step 3/3. Functionally, catalyzes the reversible cyclization of carbamoyl aspartate to dihydroorotate. The polypeptide is Dihydroorotase (Marinomonas sp. (strain MWYL1)).